Consider the following 3291-residue polypeptide: Protocadherin-16 (3291 aa).

The first 35 residues, 1–35 (MQKELSVALSCPGMKSLRTLLPLLVLLGATVPGSW), serve as a signal peptide directing secretion. At 36–2933 (GQAGSLDLQI…PDLNLLLVGA (2898 aa)) the chain is on the extracellular side. Cadherin domains are found at residues 37–137 (QAGS…APAF), 138–249 (PQAR…APAF), 250–356 (NQSR…QPSM), 369–466 (VSEA…APAF), 476–572 (LPEV…EPQF), 573–679 (QRTF…PPQF), 680–784 (YPRE…PPIF), 785–888 (EQLQ…SPAF), 889–994 (PAPE…APRF), 995–1105 (DSPT…EPTF), 1100–1205 (SEEP…SPTF), 1218–1317 (IQVP…SPDL), 1326–1429 (VPVV…APTF), 1430–1539 (ARDP…APVF), 1539–1642 (FASP…APAF), 1643–1744 (PQQE…TPTF), 1745–1848 (GNTH…APVF), 1849–1953 (PVPS…APAF), 1976–2061 (LATL…GPRF), 2062–2164 (PRTS…APRF), 2165–2270 (LRPH…RPTI), 2270–2369 (IPQP…VPTF), 2370–2475 (SQSL…APSF), 2476–2595 (TLPH…PPVF), 2596–2699 (TRAS…GPAF), 2700–2806 (PLSL…DPVF), and 2807–2926 (LAPS…APDL). Residue Asn396 is glycosylated (N-linked (GlcNAc...) asparagine). N-linked (GlcNAc...) asparagine glycosylation occurs at Asn2354. Residues 2867–2886 (SRAPGSGTTTSGGGGRTRRE) are disordered. The chain crosses the membrane as a helical span at residues 2934 to 2954 (VAASLGVVVVLALAALVLGLV). The Cytoplasmic segment spans residues 2955–3291 (RARSRKAEAA…EPPDDTELRI (337 aa)). The segment at 2978–3033 (SLQKLGREPPSPPPSEHLYHQTLPSYGGPGAGGPYPRGGSLDPSHSSGRGSAEAAE) is disordered. Gly residues predominate over residues 3004 to 3013 (GGPGAGGPYP). Ser3048 carries the phosphoserine modification. Disordered stretches follow at residues 3051 to 3081 (SSLAARGPDSGIQQDADGLSDTSCEPPAPDT) and 3226 to 3291 (ASHR…ELRI). The span at 3237–3259 (SLSSAAMSPSFSPSLSPLAARSP) shows a compositional bias: low complexity. Residues 3270–3279 (PSASALSTES) are compositionally biased toward polar residues.

As to quaternary structure, heterophilic interaction with FAT4; this interaction affects their respective protein levels. In terms of tissue distribution, expressed in the epicardium and atrioventricular sulcus (at protein level).

Its subcellular location is the cell membrane. Functionally, calcium-dependent cell-adhesion protein. Mediates functions in neuroprogenitor cell proliferation and differentiation. In the heart, has a critical role for proper morphogenesis of the mitral valve, acting in the regulation of cell migration involved in valve formation. The chain is Protocadherin-16 (Dchs1) from Mus musculus (Mouse).